Consider the following 165-residue polypeptide: UPF0254 protein MmarC5_0742 (165 aa).

The protein belongs to the UPF0254 family.

The sequence is that of UPF0254 protein MmarC5_0742 from Methanococcus maripaludis (strain C5 / ATCC BAA-1333).